The primary structure comprises 1436 residues: Pleiotropic drug resistance protein 1 (1436 aa).

Residues 165 to 438 (LDSIHILPSK…FESMGFKCPE (274 aa)) enclose the ABC transporter 1 domain. 198–205 (GPPGSGKT) is an ATP binding site. The ABC transmembrane type-2 1 domain maps to 516-729 (QLLKVCTERE…SVNAILVNEF (214 aa)). The next 7 membrane-spanning stretches (helical) occupy residues 534–554 (FVYL…MTIF), 567–587 (GGIY…NGLS), 622–642 (IPVT…VMGF), 653–673 (FLLL…IAAV), 679–699 (VAST…GFIL), 707–727 (WWIW…ILVN), and 764–784 (IGVG…SVAL). A disordered region spans residues 796–826 (TISDESENNESESSPQITSTQEGDSASENKK). The segment covering 810–821 (PQITSTQEGDSA) has biased composition (polar residues). The region spanning 838–1090 (ITFDEVVYSV…HLIKYFESIP (253 aa)) is the ABC transporter 2 domain. Residue 883 to 890 (GVSGAGKT) coordinates ATP. An ABC transmembrane type-2 2 domain is found at 1163–1377 (TQCMACLWKQ…TLYGLVASQF (215 aa)). 7 helical membrane-spanning segments follow: residues 1184-1204 (AVRL…FWDI), 1214-1234 (LVNA…QNSS), 1270-1290 (IPYI…MIGF), 1301-1321 (FFFM…TVAV), 1327-1347 (VASI…GFIV), 1358-1378 (WYYW…SQFG), and 1408-1428 (VVAA…ALGI).

Belongs to the ABC transporter superfamily. ABCG family. PDR (TC 3.A.1.205) subfamily. Roots, petals and leaf epidermis, where it is confined to glandular trichomes (at protein level).

It is found in the cell membrane. Its function is as follows. Excretes secondary metabolites such as terpenes. Involved in both constitutive and jasmonic acid-dependent induced defense. Confers some resistance to sclareol and B.cinerea. This chain is Pleiotropic drug resistance protein 1 (PDR1), found in Nicotiana plumbaginifolia (Leadwort-leaved tobacco).